The primary structure comprises 141 residues: ATP synthase epsilon chain (141 aa).

This sequence belongs to the ATPase epsilon chain family. F-type ATPases have 2 components, CF(1) - the catalytic core - and CF(0) - the membrane proton channel. CF(1) has five subunits: alpha(3), beta(3), gamma(1), delta(1), epsilon(1). CF(0) has three main subunits: a, b and c.

Its subcellular location is the cell inner membrane. Produces ATP from ADP in the presence of a proton gradient across the membrane. This chain is ATP synthase epsilon chain, found in Teredinibacter turnerae (strain ATCC 39867 / T7901).